The following is a 53-amino-acid chain: uncharacterized protein (53 aa).

Positions 34–53 (RKEKGKRHAAPLSLMGVHKR) are disordered.

This is an uncharacterized protein from Treponema pallidum (strain Nichols).